The sequence spans 134 residues: Small ribosomal subunit protein uS8 (134 aa).

Belongs to the universal ribosomal protein uS8 family. Part of the 30S ribosomal subunit. Contacts proteins S5 and S12.

In terms of biological role, one of the primary rRNA binding proteins, it binds directly to 16S rRNA central domain where it helps coordinate assembly of the platform of the 30S subunit. The protein is Small ribosomal subunit protein uS8 of Petrotoga mobilis (strain DSM 10674 / SJ95).